Reading from the N-terminus, the 297-residue chain is Ribosomal protein L11 methyltransferase (297 aa).

The S-adenosyl-L-methionine site is built by T152, G173, D195, and N234.

It belongs to the methyltransferase superfamily. PrmA family.

The protein resides in the cytoplasm. The catalysed reaction is L-lysyl-[protein] + 3 S-adenosyl-L-methionine = N(6),N(6),N(6)-trimethyl-L-lysyl-[protein] + 3 S-adenosyl-L-homocysteine + 3 H(+). Its function is as follows. Methylates ribosomal protein L11. The sequence is that of Ribosomal protein L11 methyltransferase from Cupriavidus pinatubonensis (strain JMP 134 / LMG 1197) (Cupriavidus necator (strain JMP 134)).